We begin with the raw amino-acid sequence, 200 residues long: Cysteine dioxygenase type 1 (200 aa).

Positions 86, 88, and 140 each coordinate Fe cation. A cross-link (3'-(S-cysteinyl)-tyrosine (Cys-Tyr)) is located at residues 93-157; that stretch reads CFLKLLQGNL…TEPAVSLHLY (65 aa).

This sequence belongs to the cysteine dioxygenase family. Monomer. Fe(2+) is required as a cofactor. The cofactor is Ni(2+). Zn(2+) serves as cofactor. The thioether cross-link between Cys-93 and Tyr-157 plays a structural role through stabilizing the Fe(2+) ion, and prevents the production of highly damaging free hydroxyl radicals by holding the oxygen radical via hydroxyl hydrogen. Highest expression in liver. Also expressed in kidney, lung, brain and small intestine.

It carries out the reaction L-cysteine + O2 = 3-sulfino-L-alanine + H(+). It functions in the pathway organosulfur biosynthesis; taurine biosynthesis; hypotaurine from L-cysteine: step 1/2. Its function is as follows. Catalyzes the oxidation of cysteine to cysteine sulfinic acid with addition of molecular dioxygen. The sequence is that of Cysteine dioxygenase type 1 (Cdo1) from Mus musculus (Mouse).